The chain runs to 248 residues: Tyrosine recombinase XerD-like (248 aa).

In terms of domain architecture, Core-binding (CB) spans 1–72 (MKSYIEPFIA…TANQFLYYLY (72 aa)). Residues 85-248 (DTMKVMRTEK…PVTLEKYYKS (164 aa)) enclose the Tyr recombinase domain. Residues lysine 149 and arginine 213 contribute to the active site. Tyrosine 245 serves as the catalytic O-(3'-phospho-DNA)-tyrosine intermediate.

This sequence belongs to the 'phage' integrase family. XerD-like subfamily.

It is found in the cytoplasm. Putative tyrosine recombinase. Not involved in the cutting and rejoining of the recombining DNA molecules on dif(SL) site. The polypeptide is Tyrosine recombinase XerD-like (Streptococcus pyogenes serotype M3 (strain ATCC BAA-595 / MGAS315)).